A 397-amino-acid chain; its full sequence is uncharacterized protein (397 aa).

11 helical membrane passes run 9–29 (NAVLGAAFLMATSAIGPGFLT), 38–58 (LLASFGFVILLSILLDIGAQL), 85–105 (FLAALIVMGGLAFNIGNVGGA), 112–132 (IFGIAPEMGAVISGIIAILIF), 148–168 (MGFIMVVLTFYVMFKTEPPVV), 182–202 (PIAIVTLVGGTVGGYITFAGA), 226–246 (AILIASTMRVVLFLAVLGVVS), 271–291 (VLFGVVIWAASVTSVIGAAYT), 310–330 (WIIAFIVISTVVLVTVGKPAA), 331–351 (VLVFVGTLNGLILPIALALIL), and 365–385 (HPVFLAFSGWFVVIIMAILSG).

It belongs to the NRAMP family.

It is found in the cell membrane. This is an uncharacterized protein from Haemophilus influenzae (strain ATCC 51907 / DSM 11121 / KW20 / Rd).